The primary structure comprises 433 residues: Bifunctional urease accessory protein UreEF (433 aa).

A urease accessory protein UreE region spans residues 1–200 (MKIANTFIKR…VMATAASTAS (200 aa)). A urease accessory protein UreF region spans residues 200–433 (SMTPSLDAGQ…ETQFSRLFRS (234 aa)).

In the N-terminal section; belongs to the UreE family. It in the C-terminal section; belongs to the UreF family. In terms of assembly, ureD, UreF and UreG form a complex that acts as a GTP-hydrolysis-dependent molecular chaperone, activating the urease apoprotein by helping to assemble the nickel containing metallocenter of UreC. The UreE protein probably delivers the nickel.

It localises to the cytoplasm. In terms of biological role, involved in urease metallocenter assembly. Binds nickel. Probably functions as a nickel donor during metallocenter assembly. Required for maturation of urease via the functional incorporation of the urease nickel metallocenter. This is Bifunctional urease accessory protein UreEF (ureEF) from Bordetella bronchiseptica (Alcaligenes bronchisepticus).